The sequence spans 101 residues: ATP-dependent Clp protease adapter protein ClpS 2 (101 aa).

This sequence belongs to the ClpS family. In terms of assembly, binds to the N-terminal domain of the chaperone ClpA.

Functionally, involved in the modulation of the specificity of the ClpAP-mediated ATP-dependent protein degradation. In Rhizobium meliloti (strain 1021) (Ensifer meliloti), this protein is ATP-dependent Clp protease adapter protein ClpS 2.